Consider the following 341-residue polypeptide: Dihydroorotate dehydrogenase (quinone) (341 aa).

Residues 59–63 (AGLDK) and threonine 83 contribute to the FMN site. Position 63 (lysine 63) interacts with substrate. 108 to 112 (NRMGF) contacts substrate. Residues asparagine 136 and asparagine 169 each coordinate FMN. A substrate-binding site is contributed by asparagine 169. The active-site Nucleophile is the serine 172. Residue asparagine 174 coordinates substrate. 2 residues coordinate FMN: lysine 214 and threonine 242. A substrate-binding site is contributed by 243–244 (NT). Residues glycine 265, glycine 294, and 315–316 (YS) contribute to the FMN site.

The protein belongs to the dihydroorotate dehydrogenase family. Type 2 subfamily. Monomer. The cofactor is FMN.

The protein resides in the cell membrane. The catalysed reaction is (S)-dihydroorotate + a quinone = orotate + a quinol. The protein operates within pyrimidine metabolism; UMP biosynthesis via de novo pathway; orotate from (S)-dihydroorotate (quinone route): step 1/1. Functionally, catalyzes the conversion of dihydroorotate to orotate with quinone as electron acceptor. The protein is Dihydroorotate dehydrogenase (quinone) of Neisseria meningitidis serogroup C (strain 053442).